A 173-amino-acid chain; its full sequence is Translation initiation factor IF-3 (173 aa).

It belongs to the IF-3 family. In terms of assembly, monomer.

It localises to the cytoplasm. In terms of biological role, IF-3 binds to the 30S ribosomal subunit and shifts the equilibrium between 70S ribosomes and their 50S and 30S subunits in favor of the free subunits, thus enhancing the availability of 30S subunits on which protein synthesis initiation begins. This Parvibaculum lavamentivorans (strain DS-1 / DSM 13023 / NCIMB 13966) protein is Translation initiation factor IF-3.